The following is a 75-amino-acid chain: Small ribosomal subunit protein bS18 (75 aa).

This sequence belongs to the bacterial ribosomal protein bS18 family. Part of the 30S ribosomal subunit. Forms a tight heterodimer with protein bS6.

Functionally, binds as a heterodimer with protein bS6 to the central domain of the 16S rRNA, where it helps stabilize the platform of the 30S subunit. The chain is Small ribosomal subunit protein bS18 from Thermotoga sp. (strain RQ2).